The following is a 149-amino-acid chain: Protegrin-3 (149 aa).

Residues methionine 1–alanine 29 form the signal peptide. Positions glutamine 30–valine 130 are excised as a propeptide. Residues aspartate 61–valine 80 are disordered. Intrachain disulfides connect cysteine 85-cysteine 96, cysteine 107-cysteine 124, cysteine 136-cysteine 145, and cysteine 138-cysteine 143. Arginine 148 carries the arginine amide modification.

This sequence belongs to the cathelicidin family.

It is found in the secreted. Microbicidal activity. Active against E.coli, Listeria monocytogenes and C.albicans, in vitro. The protein is Protegrin-3 (NPG3) of Sus scrofa (Pig).